A 188-amino-acid chain; its full sequence is Ribosome-recycling factor (188 aa).

This sequence belongs to the RRF family.

The protein localises to the cytoplasm. In terms of biological role, responsible for the release of ribosomes from messenger RNA at the termination of protein biosynthesis. May increase the efficiency of translation by recycling ribosomes from one round of translation to another. The polypeptide is Ribosome-recycling factor (Anaeromyxobacter sp. (strain K)).